Consider the following 111-residue polypeptide: Glutaredoxin-C2 (111 aa).

In terms of domain architecture, Glutaredoxin spans 3 to 103 (MQKAKEIVNS…PLLTEAGAIA (101 aa)). Residues Cys-23 and Cys-26 are joined by a disulfide bond.

Belongs to the glutaredoxin family. CPYC subfamily.

Its subcellular location is the cytoplasm. In terms of biological role, has a glutathione-disulfide oxidoreductase activity in the presence of NADPH and glutathione reductase. Reduces low molecular weight disulfides and proteins. The protein is Glutaredoxin-C2 (GRXC2) of Arabidopsis thaliana (Mouse-ear cress).